The following is a 226-amino-acid chain: ATP synthase subunit a (226 aa).

Transmembrane regions (helical) follow at residues 18–38 (FITG…SLGA), 79–99 (LAGT…IPGF), 105–125 (SWSF…FEGI), 134–154 (FAHF…IEII), 179–199 (LIML…VLFF), and 201–221 (GILQ…GAVL).

It belongs to the ATPase A chain family. F-type ATPases have 2 components, CF(1) - the catalytic core - and CF(0) - the membrane proton channel. CF(1) has five subunits: alpha(3), beta(3), gamma(1), delta(1), epsilon(1). CF(0) has three main subunits: a(1), b(2) and c(9-12). The alpha and beta chains form an alternating ring which encloses part of the gamma chain. CF(1) is attached to CF(0) by a central stalk formed by the gamma and epsilon chains, while a peripheral stalk is formed by the delta and b chains.

It localises to the cell inner membrane. Key component of the proton channel; it plays a direct role in the translocation of protons across the membrane. In Helicobacter pylori (strain J99 / ATCC 700824) (Campylobacter pylori J99), this protein is ATP synthase subunit a.